The following is a 258-amino-acid chain: GCN5-related N-acetyltransferase 2, chloroplastic (258 aa).

The N-terminal 58 residues, 1 to 58, are a transit peptide targeting the chloroplast; it reads MLLIPISSSSSSSISPPPNSYPSNHHSLFFSNLTFPIQHGSRKLKTLRLRANFWESIR. Residues 107-194 form an interaction with begomoviruses NSP protein region; sequence IIFSSGGEID…DHAFNATIWD (88 aa). The region spanning 107-258 is the N-acetyltransferase domain; that stretch reads IIFSSGGEID…GIKGMFWYPK (152 aa). Acetyl-CoA contacts are provided by residues 195 to 197, 203 to 208, 231 to 233, and tyrosine 238; these read VLV, GQGLGK, and DSQ. Tyrosine 238 functions as the Proton donor in the catalytic mechanism.

It belongs to the acetyltransferase family. GNAT subfamily. As to quaternary structure, oligomer. Interacts with begomoviruses NSP but not with CP. This interaction may allow NSP to recruit NSI monomers to acetylate viral genome-bound CP and thus regulate nuclear export of viral genome by NSP. Post-translationally, S-sulfhydrated and activated by hydrogen sulfide H(2)S to promote melatonin accumulation and subsequent melatonin-dependent stomotal closure to combat osmotic stress. In terms of processing, autoacetylated. Highly expressed in cauline leaves and seeds, at lower levels in stems, siliques, inflorescences and rosettes leaves and at very low levels in roots. Expressed in the xylem parenchyma and phloem of the leaves and root, and in guard cells of young leaves.

The protein localises to the plastid. It localises to the chloroplast. The catalysed reaction is 5-methoxytryptamine + acetyl-CoA = melatonin + CoA + H(+). It catalyses the reaction L-lysyl-[histone] + acetyl-CoA = N(6)-acetyl-L-lysyl-[histone] + CoA + H(+). It carries out the reaction L-lysyl-[protein] + acetyl-CoA = N(6)-acetyl-L-lysyl-[protein] + CoA + H(+). The enzyme catalyses serotonin + acetyl-CoA = N-acetylserotonin + CoA + H(+). The catalysed reaction is N-terminal L-alanyl-[protein] + acetyl-CoA = N-terminal N(alpha)-acetyl-L-alanyl-[protein] + CoA + H(+). It catalyses the reaction N-terminal L-seryl-[protein] + acetyl-CoA = N-terminal N(alpha)-acetyl-L-seryl-[protein] + CoA + H(+). It carries out the reaction N-terminal L-valyl-[protein] + acetyl-CoA = N-terminal N(alpha)-acetyl-L-valyl-[protein] + CoA + H(+). The enzyme catalyses N-terminal glycyl-[protein] + acetyl-CoA = N-terminal N(alpha)-acetylglycyl-[protein] + CoA + H(+). The catalysed reaction is an N-terminal L-alpha-aminoacyl-[protein] + acetyl-CoA = N-terminal N(alpha)-acetyl-L-alpha-aminoacyl-[protein] + CoA + H(+). It catalyses the reaction N-terminal L-threonyl-[protein] + acetyl-CoA = N-terminal N(alpha)-acetyl-L-threonyl-[protein] + CoA + H(+). It carries out the reaction N-terminal L-methionyl-[protein] + acetyl-CoA = N-terminal N(alpha)-acetyl-L-methionyl-[protein] + CoA + H(+). The enzyme catalyses N-terminal L-leucyl-[protein] + acetyl-CoA = N-terminal N(alpha)-acetyl-L-leucyl-[protein] + CoA + H(+). With respect to regulation, inhibited by the viral nuclear shuttle protein (NSP) that binds to the region required for oligomerization. Its function is as follows. Protein acetyltransferase with dual specificity triggering both N-alpha-acetylation (NTA), with a preference for alanine, serine, threonine, methionine and to a lower extent valine as substrates (can also use glycine and leucine), and epsilon-lysine acetylation (KA) of several plastid proteins. Triggers lysine acetylation in KEA1 and KEA2. Acetylates in vitro histones H2A and H3. Does not act as a transcriptional activator but required for the dynamic reorganization of thylakoid protein complexes and grana during photosynthetic state transitions. Involved in melatonin biosynthesis by catalyzing the formation of N-acetylserotonin (NAS) from serotonin and of melatonin (N-acetyl-5-methoxytryptamine) from 5-methoxytryptamine (5-MT). By triggering melatonin biosynthesis, contributes to the chloroplast protein quality control (CPQC), which plays a pivotal role in starch synthesis, and confers melatonin-associated tolerance to high light (HL) stress. Prevents the accumulation of oil and anthocyanin content in mature seeds and avoids seed germination in a melatonin-dependent manner, but promotes mucilage production in the seed coat. Contributes to melatonin-mediated anthocyanin production in cold-exposed seedlings. Implicated in melatonin-monitored circadian dynamics of stomatal aperture to minimize night water loss and promote drought tolerance, partly by triggering hydrogen sulfide H(2)S-dependent stomotal closure in response to osmotic stress. Functionally, (Microbial infection) Required for begomovirus infection and systemic spread. In case of begomoviruses infection, acetylates the capsid protein (CP), but not the nuclear shuttle protein (NSP). Stimulates melatonin-triggered defense responses to the necrotrophic Botrytis cinerea. This chain is GCN5-related N-acetyltransferase 2, chloroplastic, found in Arabidopsis thaliana (Mouse-ear cress).